Consider the following 681-residue polypeptide: CAI-1 autoinducer sensor kinase/phosphatase CqsS (681 aa).

4 helical membrane passes run 17–37 (LVGW…EFMF), 73–93 (AYYQ…MLLM), 112–132 (ILLV…IGLA), and 148–168 (MDWT…LFYF). Positions 187 to 413 (GIAHEMRNPL…QFTMTFPTIG (227 aa)) constitute a Histidine kinase domain. Position 190 is a phosphohistidine; by autocatalysis (H190). Positions 564 to 681 (TIMVVDDNES…RLFDKIANWI (118 aa)) constitute a Response regulatory domain. 4-aspartylphosphate is present on D613.

It localises to the cell membrane. It carries out the reaction ATP + protein L-histidine = ADP + protein N-phospho-L-histidine.. Functionally, senses the quorum-sensing autoinducer CAI-1 ((S)-3-hydroxytridecan-4-one) which probably functions as an intragenus signal. The sensory signal is then relayed to LuxU and LuxO. The protein is CAI-1 autoinducer sensor kinase/phosphatase CqsS (cqsS) of Vibrio campbellii (strain ATCC BAA-1116).